The chain runs to 283 residues: Shikimate dehydrogenase (NADP(+)) (283 aa).

Residues 16–18 (SLS) and Thr63 each bind shikimate. Lys67 serves as the catalytic Proton acceptor. Position 79 (Asp79) interacts with NADP(+). The shikimate site is built by Asn88 and Asp103. NADP(+)-binding positions include 128–132 (GAGGA), Ala223, and Gly243.

This sequence belongs to the shikimate dehydrogenase family. In terms of assembly, homodimer.

The catalysed reaction is shikimate + NADP(+) = 3-dehydroshikimate + NADPH + H(+). The protein operates within metabolic intermediate biosynthesis; chorismate biosynthesis; chorismate from D-erythrose 4-phosphate and phosphoenolpyruvate: step 4/7. Involved in the biosynthesis of the chorismate, which leads to the biosynthesis of aromatic amino acids. Catalyzes the reversible NADPH linked reduction of 3-dehydroshikimate (DHSA) to yield shikimate (SA). This chain is Shikimate dehydrogenase (NADP(+)), found in Xanthomonas campestris pv. campestris (strain B100).